Here is a 601-residue protein sequence, read N- to C-terminus: ATP-dependent lipid A-core flippase (601 aa).

Residues 28–328 (LLSVVGLIVY…LTRVNAEFQR (301 aa)) enclose the ABC transmembrane type-1 domain. 6 helical membrane-spanning segments follow: residues 32–52 (VGLI…GPFI), 81–101 (VLLM…FANF), 160–180 (ALIS…LMFY), 183–203 (WKLS…ITIV), 267–287 (AVSQ…VLYA), and 296–316 (DLTA…LQPI). In terms of domain architecture, ABC transporter spans 360-597 (LRFDNVSFSY…GGMYAKLYQM (238 aa)). ATP is bound at residue 394–401 (GRSGSGKS).

This sequence belongs to the ABC transporter superfamily. Lipid exporter (TC 3.A.1.106) family. In terms of assembly, homodimer.

Its subcellular location is the cell inner membrane. It catalyses the reaction ATP + H2O + lipid A-core oligosaccharideSide 1 = ADP + phosphate + lipid A-core oligosaccharideSide 2.. Involved in lipopolysaccharide (LPS) biosynthesis. Translocates lipid A-core from the inner to the outer leaflet of the inner membrane. Transmembrane domains (TMD) form a pore in the inner membrane and the ATP-binding domain (NBD) is responsible for energy generation. This is ATP-dependent lipid A-core flippase from Shewanella oneidensis (strain ATCC 700550 / JCM 31522 / CIP 106686 / LMG 19005 / NCIMB 14063 / MR-1).